The sequence spans 446 residues: Amino-acid acetyltransferase (446 aa).

The 133-residue stretch at 299–431 (EQVRDAEIDD…SHLPMKKQKL (133 aa)) folds into the N-acetyltransferase domain.

This sequence belongs to the acetyltransferase family. ArgA subfamily.

It is found in the cytoplasm. The enzyme catalyses L-glutamate + acetyl-CoA = N-acetyl-L-glutamate + CoA + H(+). It functions in the pathway amino-acid biosynthesis; L-arginine biosynthesis; N(2)-acetyl-L-ornithine from L-glutamate: step 1/4. This is Amino-acid acetyltransferase from Aliivibrio fischeri (strain MJ11) (Vibrio fischeri).